Consider the following 148-residue polypeptide: uncharacterized protein (148 aa).

Positions isoleucine 3–glutamate 64 constitute an HTH asnC-type domain. Residues tyrosine 22–lysine 41 constitute a DNA-binding region (H-T-H motif).

This is an uncharacterized protein from Pyrococcus furiosus (strain ATCC 43587 / DSM 3638 / JCM 8422 / Vc1).